A 220-amino-acid polypeptide reads, in one-letter code: Putative NAD(P)H nitroreductase SERP2086 (220 aa).

This sequence belongs to the nitroreductase family. FMN is required as a cofactor.

The chain is Putative NAD(P)H nitroreductase SERP2086 from Staphylococcus epidermidis (strain ATCC 35984 / DSM 28319 / BCRC 17069 / CCUG 31568 / BM 3577 / RP62A).